The primary structure comprises 440 residues: Proline--tRNA ligase (440 aa).

It belongs to the class-II aminoacyl-tRNA synthetase family. ProS type 2 subfamily. In terms of assembly, homodimer.

The protein localises to the cytoplasm. It catalyses the reaction tRNA(Pro) + L-proline + ATP = L-prolyl-tRNA(Pro) + AMP + diphosphate. Its function is as follows. Catalyzes the attachment of proline to tRNA(Pro) in a two-step reaction: proline is first activated by ATP to form Pro-AMP and then transferred to the acceptor end of tRNA(Pro). The protein is Proline--tRNA ligase of Xanthobacter autotrophicus (strain ATCC BAA-1158 / Py2).